A 398-amino-acid chain; its full sequence is Acetate kinase 1 (398 aa).

Asparagine 9 is a Mg(2+) binding site. An ATP-binding site is contributed by lysine 16. Arginine 89 contributes to the substrate binding site. Aspartate 146 functions as the Proton donor/acceptor in the catalytic mechanism. Residues 206–210 (HLGNG), 281–283 (DCR), and 329–333 (GIGEN) each bind ATP. A Mg(2+)-binding site is contributed by glutamate 384.

This sequence belongs to the acetokinase family. As to quaternary structure, homodimer. Mg(2+) serves as cofactor. Mn(2+) is required as a cofactor.

The protein resides in the cytoplasm. The catalysed reaction is acetate + ATP = acetyl phosphate + ADP. It functions in the pathway metabolic intermediate biosynthesis; acetyl-CoA biosynthesis; acetyl-CoA from acetate: step 1/2. In terms of biological role, catalyzes the formation of acetyl phosphate from acetate and ATP. Can also catalyze the reverse reaction. In Vibrio vulnificus (strain CMCP6), this protein is Acetate kinase 1.